The chain runs to 694 residues: Elongation factor G 1 (694 aa).

One can recognise a tr-type G domain in the interval 5–280 (SRYRNIGIFA…AVVDYLPDPT (276 aa)). GTP-binding positions include 14–21 (AHVDAGKT), 78–82 (DTPGH), and 132–135 (NKLD).

This sequence belongs to the TRAFAC class translation factor GTPase superfamily. Classic translation factor GTPase family. EF-G/EF-2 subfamily.

It localises to the cytoplasm. Catalyzes the GTP-dependent ribosomal translocation step during translation elongation. During this step, the ribosome changes from the pre-translocational (PRE) to the post-translocational (POST) state as the newly formed A-site-bound peptidyl-tRNA and P-site-bound deacylated tRNA move to the P and E sites, respectively. Catalyzes the coordinated movement of the two tRNA molecules, the mRNA and conformational changes in the ribosome. The protein is Elongation factor G 1 of Methylococcus capsulatus (strain ATCC 33009 / NCIMB 11132 / Bath).